The sequence spans 45 residues: Large ribosomal subunit protein bL34 (45 aa).

It belongs to the bacterial ribosomal protein bL34 family.

The chain is Large ribosomal subunit protein bL34 from Frankia casuarinae (strain DSM 45818 / CECT 9043 / HFP020203 / CcI3).